Reading from the N-terminus, the 352-residue chain is Nicotinate-nucleotide--dimethylbenzimidazole phosphoribosyltransferase (352 aa).

Glu-316 (proton acceptor) is an active-site residue.

The protein belongs to the CobT family.

The catalysed reaction is 5,6-dimethylbenzimidazole + nicotinate beta-D-ribonucleotide = alpha-ribazole 5'-phosphate + nicotinate + H(+). It functions in the pathway nucleoside biosynthesis; alpha-ribazole biosynthesis; alpha-ribazole from 5,6-dimethylbenzimidazole: step 1/2. Catalyzes the synthesis of alpha-ribazole-5'-phosphate from nicotinate mononucleotide (NAMN) and 5,6-dimethylbenzimidazole (DMB). In Yersinia enterocolitica serotype O:8 / biotype 1B (strain NCTC 13174 / 8081), this protein is Nicotinate-nucleotide--dimethylbenzimidazole phosphoribosyltransferase.